The chain runs to 894 residues: Microsomal triglyceride transfer protein large subunit (894 aa).

The first 21 residues, 1–21 (MILLAVLFLCFFSSYSASVKG), serve as a signal peptide directing secretion. In terms of domain architecture, Vitellogenin spans 28–658 (LNNERLYKLT…IFQYIGKAEL (631 aa)). An intrachain disulfide couples Cys-174 to Cys-194.

As to quaternary structure, interacts with PRAP1. Heterodimer; heterodimerizes with the protein disulfide isomerase (P4HB/PDI). Interacts with APOB. In terms of assembly, heterodimer; heterodimerizes with the protein disulfide isomerase (P4HB/PDI). Cleaved by signal peptidase between residues Gln-33 and Asn-34. In terms of tissue distribution, mainly expressed in the intestine and the liver, and at lower levels in white and brown fat cells. Expressed in heart. Ubiquitous, and is the major isoform in hematopoietic cells and adipocytes.

The protein localises to the endoplasmic reticulum. Its subcellular location is the golgi apparatus. It catalyses the reaction a 1,2-diacyl-sn-glycero-3-phosphocholine(in) = a 1,2-diacyl-sn-glycero-3-phosphocholine(out). It carries out the reaction a 1,2-diacyl-sn-glycero-3-phosphoethanolamine(in) = a 1,2-diacyl-sn-glycero-3-phosphoethanolamine(out). The enzyme catalyses a cholesterol ester(in) = a cholesterol ester(out). The catalysed reaction is a triacyl-sn-glycerol(in) = a triacyl-sn-glycerol(out). In terms of biological role, catalyzes the transport of triglyceride, cholesteryl ester, and phospholipid between phospholipid surfaces. Required for the assembly and secretion of plasma lipoproteins that contain apolipoprotein B. May be involved in regulating cholesteryl ester biosynthesis in cells that produce lipoproteins. Functionally, critical for the development of natural killer T (NKT) cells. Required for the assembly and secretion of plasma lipoproteins that contain apolipoprotein B. The protein is Microsomal triglyceride transfer protein large subunit (Mttp) of Mus musculus (Mouse).